Reading from the N-terminus, the 265-residue chain is Small ribosomal subunit protein uS2 (265 aa).

This sequence belongs to the universal ribosomal protein uS2 family.

This is Small ribosomal subunit protein uS2 from Ligilactobacillus salivarius (strain UCC118) (Lactobacillus salivarius).